The primary structure comprises 82 residues: Acyl carrier protein (82 aa).

One can recognise a Carrier domain in the interval 3-81; that stretch reads LSREKVLESI…DAVDFIIAAK (79 aa). At Ser-41 the chain carries O-(pantetheine 4'-phosphoryl)serine.

This sequence belongs to the acyl carrier protein (ACP) family. 4'-phosphopantetheine is transferred from CoA to a specific serine of apo-ACP by AcpS. This modification is essential for activity because fatty acids are bound in thioester linkage to the sulfhydryl of the prosthetic group.

It is found in the cytoplasm. Its pathway is lipid metabolism; fatty acid biosynthesis. Its function is as follows. Carrier of the growing fatty acid chain in fatty acid biosynthesis. This is Acyl carrier protein from Tropheryma whipplei (strain Twist) (Whipple's bacillus).